Reading from the N-terminus, the 725-residue chain is Threonine--tRNA ligase, cytoplasmic (725 aa).

The region spanning 80-142 is the TGS domain; sequence EPIQITLPDG…EGNAKLELLK (63 aa).

Belongs to the class-II aminoacyl-tRNA synthetase family.

It is found in the cytoplasm. It catalyses the reaction tRNA(Thr) + L-threonine + ATP = L-threonyl-tRNA(Thr) + AMP + diphosphate + H(+). This chain is Threonine--tRNA ligase, cytoplasmic, found in Caenorhabditis elegans.